Here is a 107-residue protein sequence, read N- to C-terminus: Thioredoxin (107 aa).

The region spanning 2-107 is the Thioredoxin domain; sequence PSPIQVTDFS…TLTNALKKYL (106 aa). Catalysis depends on nucleophile residues Cys32 and Cys35. An intrachain disulfide couples Cys32 to Cys35.

It belongs to the thioredoxin family.

It localises to the plastid. Its subcellular location is the chloroplast. In terms of biological role, participates in various redox reactions through the reversible oxidation of its active center dithiol to a disulfide and catalyzes dithiol-disulfide exchange reactions. This chain is Thioredoxin (trxA), found in Cyanidium caldarium (Red alga).